Here is a 921-residue protein sequence, read N- to C-terminus: Sodium/calcium exchanger 2 (921 aa).

A signal peptide spans 1–20; that stretch reads MAPLALVGVTLLLAAPPCSG. Residues 21-68 are Extracellular-facing; the sequence is AATPTPSLPPPPANDSDTSTGGCQGSYRCQPGVLLPVWEPDDPSLGDK. The tract at residues 22–42 is disordered; sequence ATPTPSLPPPPANDSDTSTGG. The N-linked (GlcNAc...) asparagine glycan is linked to Asn-34. A helical membrane pass occupies residues 69 to 90; it reads AARAVVYFVAMVYMFLGVSIIA. Residues 91–130 are Cytoplasmic-facing; that stretch reads DRFMAAIEVITSKEKEITITKANGETSVGTVRIWNETVSN. A helical membrane pass occupies residues 131-152; sequence LTLMALGSSAPEILLSVIEVCG. One copy of the Alpha-1 repeat lies at 135 to 175; sequence ALGSSAPEILLSVIEVCGHNFQAGELGPGTIVGSAAFNMFV. Residues 153–164 lie on the Extracellular side of the membrane; the sequence is HNFQAGELGPGT. The chain crosses the membrane as a helical span at residues 165–185; it reads IVGSAAFNMFVVIAVCIYVIP. Residues 186–196 lie on the Cytoplasmic side of the membrane; sequence AGESRKIKHLR. A helical transmembrane segment spans residues 197–219; it reads VFFVTASWSIFAYVWLYLILAVF. The Extracellular portion of the chain corresponds to 220–222; sequence SPG. Residues 223-246 form a helical membrane-spanning segment; the sequence is VVQVWEALLTLVFFPVCVVFAWMA. At 247 to 720 the chain is on the cytoplasmic side; it reads DKRLLFYKYV…DGSREERLPS (474 aa). A putative calmodulin-binding region region spans residues 248–267; sequence KRLLFYKYVYKRYRTDPRSG. Calx-beta domains lie at 384–483 and 512–612; these read GAGE…VRLL and ATVT…IELG. Glu-407, Asp-443, Asp-468, Asp-469, Ile-471, Glu-473, Glu-476, Asp-518, Asp-519, Asp-520, Glu-536, Asp-598, Glu-599, and Glu-600 together coordinate Ca(2+). A Phosphoserine modification is found at Ser-622. Glu-665 lines the Ca(2+) pocket. Residues 721–740 form a helical membrane-spanning segment; sequence CFDYVMHFLTVFWKVLFACV. Residues 741–747 are Extracellular-facing; the sequence is PPTEYCH. A helical transmembrane segment spans residues 748 to 770; it reads GWACFGVSILVIGLLTALIGDLA. The Cytoplasmic segment spans residues 771-772; the sequence is SH. The helical transmembrane segment at 773 to 791 threads the bilayer; the sequence is FGCTVGLKDSVNAVVFVAL. The stretch at 790–826 is one Alpha-2 repeat; sequence ALGTSIPDTFASKVAALQDQCADASIGNVTGSNAVNV. Over 792 to 822 the chain is Extracellular; it reads GTSIPDTFASKVAALQDQCADASIGNVTGSN. Asn-817 carries an N-linked (GlcNAc...) asparagine glycan. A helical transmembrane segment spans residues 823–843; that stretch reads AVNVFLGLGVAWSVAAVYWAV. The Cytoplasmic portion of the chain corresponds to 844 to 854; it reads QGRPFEVRTGT. A helical transmembrane segment spans residues 855 to 875; that stretch reads LAFSVTLFTVFAFVGIAVLLY. The Extracellular portion of the chain corresponds to 876-892; it reads RRRPHIGGELGGPRGPK. Residues 893–909 form a helical membrane-spanning segment; the sequence is LATTALFLGLWLLYILF. The Cytoplasmic segment spans residues 910 to 921; sequence ASLEAYCHIRGF.

It belongs to the Ca(2+):cation antiporter (CaCA) (TC 2.A.19) family. SLC8 subfamily.

The protein localises to the cell membrane. It is found in the basolateral cell membrane. Its subcellular location is the perikaryon. It localises to the cell projection. The protein resides in the dendrite. The protein localises to the dendritic spine. It carries out the reaction Ca(2+)(in) + 3 Na(+)(out) = Ca(2+)(out) + 3 Na(+)(in). Its activity is regulated as follows. Calcium transport is down-regulated by Na(+) and stimulated by Ca(2+). In terms of biological role, mediates the electrogenic exchange of Ca(2+) against Na(+) ions across the cell membrane, and thereby contributes to the regulation of cytoplasmic Ca(2+) levels and Ca(2+)-dependent cellular processes. Contributes to cellular Ca(2+) homeostasis in excitable cells. Contributes to the rapid decrease of cytoplasmic Ca(2+) levels back to baseline after neuronal activation, and thereby contributes to modulate synaptic plasticity, learning and memory. Plays a role in regulating urinary Ca(2+) and Na(+) excretion. This is Sodium/calcium exchanger 2 (SLC8A2) from Homo sapiens (Human).